Here is a 182-residue protein sequence, read N- to C-terminus: Ribosome-recycling factor (182 aa).

This sequence belongs to the RRF family.

The protein resides in the cytoplasm. Responsible for the release of ribosomes from messenger RNA at the termination of protein biosynthesis. May increase the efficiency of translation by recycling ribosomes from one round of translation to another. This Prochlorococcus marinus (strain MIT 9313) protein is Ribosome-recycling factor.